Consider the following 252-residue polypeptide: Small ribosomal subunit protein uS2 (252 aa).

The tract at residues 231-252 (SVESTAQEQVEETAQEETAVEA) is disordered. A compositionally biased stretch (acidic residues) spans 239–252 (QVEETAQEETAVEA).

This sequence belongs to the universal ribosomal protein uS2 family.

The protein is Small ribosomal subunit protein uS2 of Acetivibrio thermocellus (strain ATCC 27405 / DSM 1237 / JCM 9322 / NBRC 103400 / NCIMB 10682 / NRRL B-4536 / VPI 7372) (Clostridium thermocellum).